A 492-amino-acid polypeptide reads, in one-letter code: N-succinylglutamate 5-semialdehyde dehydrogenase (492 aa).

220-225 (GSASTG) contacts NAD(+). Catalysis depends on residues Glu-243 and Cys-277.

This sequence belongs to the aldehyde dehydrogenase family. AstD subfamily.

The enzyme catalyses N-succinyl-L-glutamate 5-semialdehyde + NAD(+) + H2O = N-succinyl-L-glutamate + NADH + 2 H(+). It functions in the pathway amino-acid degradation; L-arginine degradation via AST pathway; L-glutamate and succinate from L-arginine: step 4/5. Catalyzes the NAD-dependent reduction of succinylglutamate semialdehyde into succinylglutamate. The sequence is that of N-succinylglutamate 5-semialdehyde dehydrogenase from Salmonella schwarzengrund (strain CVM19633).